Reading from the N-terminus, the 456-residue chain is PTS system sucrose-specific EIIBC component (456 aa).

The PTS EIIB type-1 domain occupies 4-87 (EQISRSLLPL…IQAAGISESS (84 aa)). The active-site Phosphocysteine intermediate; for EIIB activity is the Cys-26. In terms of domain architecture, PTS EIIC type-1 spans 107 to 456 (RLLSNIFVPI…LTLKYKTDAE (350 aa)). The next 10 helical transmembrane spans lie at 112 to 132 (IFVP…LLGM), 144 to 164 (ALYI…PILI), 181 to 201 (TLGG…AAGF), 209 to 229 (IEVA…AVWF), 247 to 267 (LILT…LLIG), 288 to 308 (AGWL…ITGI), 329 to 349 (FLLP…FAVW), 360 to 380 (ITLP…IFGI), 388 to 408 (FIAA…MHVY), and 428 to 448 (LLNY…LSLT).

The protein localises to the cell inner membrane. It carries out the reaction N(pros)-phospho-L-histidyl-[protein](out) + sucrose = sucrose 6(G)-phosphate(in) + L-histidyl-[protein]. Its function is as follows. The phosphoenolpyruvate-dependent sugar phosphotransferase system (sugar PTS), a major carbohydrate active transport system, catalyzes the phosphorylation of incoming sugar substrates concomitantly with their translocation across the cell membrane. This system is involved in sucrose transport. This chain is PTS system sucrose-specific EIIBC component, found in Klebsiella pneumoniae.